We begin with the raw amino-acid sequence, 88 residues long: Defensin-like protein 267 (88 aa).

Residues 1–23 form the signal peptide; the sequence is MMLSKVVLLALLLSLSCLWVAKA. Cystine bridges form between Cys45-Cys63, Cys51-Cys68, and Cys55-Cys70.

The protein belongs to the DEFL family.

Its subcellular location is the secreted. The sequence is that of Defensin-like protein 267 from Arabidopsis thaliana (Mouse-ear cress).